The chain runs to 614 residues: MYPLLDRIEIPAQLRTLKRNQLPQLADELRNFLVESVAGTGGHLSSNLGTVELTIALHYVFDTPFDRLIWDVGHQTYAHKILTGRRTGMARLRMQGGIAGFPRRDESEYDAFGTAHSSTSISAALGMAVAARLKGVKQHAIAVIGDGAMSAGMAFEALNNAGVMDANLLVILNDNDMSISPPVGALNNYLAKLMSGRFYATARRAGEKMLGVVPPVLELAKRAEEHVKGMVTPSTLFEEFGFNYIGPIDGHDLDILLTTLNNIKQLDGPQFLHVVTRKGKGYKQAEEDPILYHGVGKFQPDQGIVSKPSAKLAYTQIFGDWLCDMAAKDSRLIGITPAMREGSGLVRFSKEYPDRYFDVGIAEQHAVTFAAGAACEGLKPVVAIYSTFLQRAYDQLIHDVAIQNLPVVFAIDRAGLVGADGPTHAGSFDLSYLRCIPNITVMTPADENECRQMLYTAFQLDTPAAVRYPRGSGPGVQIQQEMQTIPLGKGEIRRQGKQIALLAFGSMLTPCLEAGDELDATVVNMRFVKPLDQELVATLAAEHELLVTIEENTIMGGAGSAVMESLSSLDKNVRLLQLGLPDSFIDQGDPAHMLSDCGLDKAGIIQSIKERFSL.

Residues histidine 74 and 115-117 (AHS) each bind thiamine diphosphate. Residue aspartate 146 participates in Mg(2+) binding. Thiamine diphosphate contacts are provided by residues 147-148 (GA), asparagine 175, tyrosine 282, and glutamate 363. Asparagine 175 serves as a coordination point for Mg(2+).

This sequence belongs to the transketolase family. DXPS subfamily. In terms of assembly, homodimer. Mg(2+) is required as a cofactor. It depends on thiamine diphosphate as a cofactor.

It catalyses the reaction D-glyceraldehyde 3-phosphate + pyruvate + H(+) = 1-deoxy-D-xylulose 5-phosphate + CO2. It participates in metabolic intermediate biosynthesis; 1-deoxy-D-xylulose 5-phosphate biosynthesis; 1-deoxy-D-xylulose 5-phosphate from D-glyceraldehyde 3-phosphate and pyruvate: step 1/1. Catalyzes the acyloin condensation reaction between C atoms 2 and 3 of pyruvate and glyceraldehyde 3-phosphate to yield 1-deoxy-D-xylulose-5-phosphate (DXP). This Nitrosomonas europaea (strain ATCC 19718 / CIP 103999 / KCTC 2705 / NBRC 14298) protein is 1-deoxy-D-xylulose-5-phosphate synthase.